Reading from the N-terminus, the 76-residue chain is Exodeoxyribonuclease 7 small subunit (76 aa).

Belongs to the XseB family. In terms of assembly, heterooligomer composed of large and small subunits.

It is found in the cytoplasm. The enzyme catalyses Exonucleolytic cleavage in either 5'- to 3'- or 3'- to 5'-direction to yield nucleoside 5'-phosphates.. Bidirectionally degrades single-stranded DNA into large acid-insoluble oligonucleotides, which are then degraded further into small acid-soluble oligonucleotides. The polypeptide is Exodeoxyribonuclease 7 small subunit (Geobacillus thermodenitrificans (strain NG80-2)).